Reading from the N-terminus, the 545-residue chain is DNA mismatch repair protein MutL (545 aa).

Residues 517–545 (RRSGARGGGEARPRPQEESFPEAPLPREP) are disordered.

The protein belongs to the DNA mismatch repair MutL/HexB family.

This protein is involved in the repair of mismatches in DNA. It is required for dam-dependent methyl-directed DNA mismatch repair. May act as a 'molecular matchmaker', a protein that promotes the formation of a stable complex between two or more DNA-binding proteins in an ATP-dependent manner without itself being part of a final effector complex. The protein is DNA mismatch repair protein MutL of Thermus thermophilus (strain ATCC 27634 / DSM 579 / HB8).